We begin with the raw amino-acid sequence, 386 residues long: EARP and GARP complex-interacting protein 1 (386 aa).

Position 1 is an N-acetylmethionine (Met-1). 4 WD repeats span residues 132-172 (GAQG…SQAV), 182-222 (RGQL…QIYC), 226-266 (AHGQ…EPVK), and 270-310 (EHSH…SEPF). A disordered region spans residues 312-332 (HLVDDDDVSDPEEHHTEKSKE). A Phosphoserine modification is found at Ser-320. The span at 322-332 (PEEHHTEKSKE) shows a compositional bias: basic and acidic residues. The WD 5 repeat unit spans residues 344 to 384 (EHEDSVYAVDWASADPWLFASLSYDGRLVINRVPRALKYHI).

Belongs to the WD repeat EIPR1 family. Interacts with two multisubunit tethering complexes: EARP composed of VPS50, VPS51, VPS52 and VPS53 subunits and GARP complex composed of VPS51, VPS52, VPS53 and VPS54 subunits. Interacts with SNAP29. Ubiquitous. Highly expressed in brain, adipose tissue, spleen and kidney (at protein level).

It localises to the golgi apparatus. The protein localises to the trans-Golgi network. Its function is as follows. Acts as a component of endosomal retrieval machinery that is involved in protein transport from early endosomes to either recycling endosomes or the trans-Golgi network. Mediates the recruitment of Golgi-associated retrograde protein (GARP) complex to the trans-Golgi network and controls early endosome-to-Golgi transport of internalized protein. Promotes the recycling of internalized transferrin receptor (TFRC) to the plasma membrane through interaction with endosome-associated recycling protein (EARP) complex. Controls proper insulin distribution and secretion, and retention of cargo in mature dense core vesicles. Required for the stability of the endosome-associated retrograde protein (EARP) complex subunits and for proper localization and association of EARP with membranes. This chain is EARP and GARP complex-interacting protein 1, found in Rattus norvegicus (Rat).